We begin with the raw amino-acid sequence, 128 residues long: Large ribosomal subunit protein bL17 (128 aa).

It belongs to the bacterial ribosomal protein bL17 family. As to quaternary structure, part of the 50S ribosomal subunit. Contacts protein L32.

This chain is Large ribosomal subunit protein bL17, found in Edwardsiella ictaluri (strain 93-146).